The following is a 120-amino-acid chain: Large ribosomal subunit protein bL19 (120 aa).

This sequence belongs to the bacterial ribosomal protein bL19 family.

Functionally, this protein is located at the 30S-50S ribosomal subunit interface and may play a role in the structure and function of the aminoacyl-tRNA binding site. This chain is Large ribosomal subunit protein bL19, found in Gloeothece citriformis (strain PCC 7424) (Cyanothece sp. (strain PCC 7424)).